We begin with the raw amino-acid sequence, 399 residues long: Developmentally-regulated G-protein 2 (399 aa).

One can recognise an OBG-type G domain in the interval Gly63–Gly288. GTP contacts are provided by residues Gly69–Ser76, Asp115–Ile119, and Asn246–Asp249. The 79-residue stretch at Gly288–Lys366 folds into the TGS domain. Residues Glu372–Gln399 form a disordered region. Residues Ile388–Gln399 are compositionally biased toward basic and acidic residues.

This sequence belongs to the TRAFAC class OBG-HflX-like GTPase superfamily. OBG GTPase family.

The protein localises to the cytoplasm. Its function is as follows. Binds GDP and GTP, and has low GTPase activity. This chain is Developmentally-regulated G-protein 2 (DRG2), found in Arabidopsis thaliana (Mouse-ear cress).